We begin with the raw amino-acid sequence, 639 residues long: 3-hydroxybenzoate 4-monooxygenase (639 aa).

FAD is bound by residues 34 to 64 (DVLI…IVEQ), glutamine 73, valine 166, asparagine 212, 269 to 271 (RFY), tyrosine 317, aspartate 349, and serine 365.

Belongs to the PheA/TfdB FAD monooxygenase family. Homodimer. It depends on FAD as a cofactor.

It catalyses the reaction 3-hydroxybenzoate + NADPH + O2 + H(+) = 3,4-dihydroxybenzoate + NADP(+) + H2O. Its function is as follows. Converts 3-hydroxybenzoate (m-hydroxybenzoate), and to a lesser extent p-hydroxybenzoate, to 3,4-dihydroxybenzoate (protocatechuate). Also acts on a number of analogs of 3-hydroxybenzoate substituted in the 2, 4, 5 and 6 positions. The polypeptide is 3-hydroxybenzoate 4-monooxygenase (mobA) (Comamonas testosteroni (Pseudomonas testosteroni)).